The chain runs to 572 residues: Proline--tRNA ligase (572 aa).

Belongs to the class-II aminoacyl-tRNA synthetase family. ProS type 1 subfamily. In terms of assembly, homodimer.

The protein resides in the cytoplasm. It carries out the reaction tRNA(Pro) + L-proline + ATP = L-prolyl-tRNA(Pro) + AMP + diphosphate. Catalyzes the attachment of proline to tRNA(Pro) in a two-step reaction: proline is first activated by ATP to form Pro-AMP and then transferred to the acceptor end of tRNA(Pro). As ProRS can inadvertently accommodate and process non-cognate amino acids such as alanine and cysteine, to avoid such errors it has two additional distinct editing activities against alanine. One activity is designated as 'pretransfer' editing and involves the tRNA(Pro)-independent hydrolysis of activated Ala-AMP. The other activity is designated 'posttransfer' editing and involves deacylation of mischarged Ala-tRNA(Pro). The misacylated Cys-tRNA(Pro) is not edited by ProRS. The protein is Proline--tRNA ligase of Psychrobacter arcticus (strain DSM 17307 / VKM B-2377 / 273-4).